Reading from the N-terminus, the 325-residue chain is NADH-cytochrome b5 reductase 2 (325 aa).

The chain crosses the membrane as a helical span at residues 32–48; it reads VPLYGGLALAAGGAYYY. The region spanning 74–179 is the FAD-binding FR-type domain; that stretch reads QGWVDLKLAG…KGPIPKYPWE (106 aa). Residue 182 to 217 coordinates FAD; the sequence is KHDHICMIAGGTGITPMYQIIRKIFNNPNDKTKVTL.

Belongs to the flavoprotein pyridine nucleotide cytochrome reductase family. FAD serves as cofactor.

The protein resides in the mitochondrion outer membrane. It carries out the reaction 2 Fe(III)-[cytochrome b5] + NADH = 2 Fe(II)-[cytochrome b5] + NAD(+) + H(+). In terms of biological role, may mediate the reduction of outer membrane cytochrome b5. This is NADH-cytochrome b5 reductase 2 (MCR1) from Coccidioides immitis (strain RS) (Valley fever fungus).